The sequence spans 503 residues: E3 ubiquitin-protein ligase IE61 (503 aa).

Residues 19–58 form an RING-type zinc finger; the sequence is CAICMSAISGLGKTLPCLHDFCFVCIQTWTSTSAQCPLCR. Disordered regions lie at residues 175 to 194, 367 to 418, and 445 to 503; these read AVIT…PSSR, SGPI…LFVD, and AALP…VRRK. Residues 375–388 show a composition bias toward polar residues; sequence GGSTSQDTSVSNIH. Low complexity predominate over residues 389–403; it reads RSPPGGSSTQPSSGR. The segment covering 404 to 414 has biased composition (basic residues); sequence RPGRPKGVKRR. Low complexity predominate over residues 471 to 480; sequence PSTSGSSPSP.

As to quaternary structure, interacts with host BTRC; this interaction seems to inactivate SCF-mediated protein degradation in general.

It catalyses the reaction S-ubiquitinyl-[E2 ubiquitin-conjugating enzyme]-L-cysteine + [acceptor protein]-L-lysine = [E2 ubiquitin-conjugating enzyme]-L-cysteine + N(6)-ubiquitinyl-[acceptor protein]-L-lysine.. RING-finger E3 ubiquitin ligase that degrades host SP100, one of the major components of ND10 nuclear bodies, thereby disrupting the organization of these bodies. Also plays a role in the inhibition of host NF-kappa-B pathway by blocking the SCF(BTRC)-mediated addition of ubiquitin chains to host IkappaBalpha/NFKBIA, thereby interfering with its degradation. In Cercopithecine herpesvirus 9 (strain DHV) (CeHV-9), this protein is E3 ubiquitin-protein ligase IE61.